Consider the following 82-residue polypeptide: Small ribosomal subunit protein bS16 (82 aa).

Belongs to the bacterial ribosomal protein bS16 family.

In Sodalis glossinidius (strain morsitans), this protein is Small ribosomal subunit protein bS16.